A 187-amino-acid chain; its full sequence is Peptidyl-tRNA hydrolase (187 aa).

Tyrosine 15 contributes to the tRNA binding site. Residue histidine 20 is the Proton acceptor of the active site. Tyrosine 64, asparagine 66, and asparagine 112 together coordinate tRNA.

This sequence belongs to the PTH family. In terms of assembly, monomer.

The protein resides in the cytoplasm. The enzyme catalyses an N-acyl-L-alpha-aminoacyl-tRNA + H2O = an N-acyl-L-amino acid + a tRNA + H(+). Hydrolyzes ribosome-free peptidyl-tRNAs (with 1 or more amino acids incorporated), which drop off the ribosome during protein synthesis, or as a result of ribosome stalling. Functionally, catalyzes the release of premature peptidyl moieties from peptidyl-tRNA molecules trapped in stalled 50S ribosomal subunits, and thus maintains levels of free tRNAs and 50S ribosomes. This Phocaeicola vulgatus (strain ATCC 8482 / DSM 1447 / JCM 5826 / CCUG 4940 / NBRC 14291 / NCTC 11154) (Bacteroides vulgatus) protein is Peptidyl-tRNA hydrolase.